Consider the following 70-residue polypeptide: Cecropin-P1 (70 aa).

The signal sequence occupies residues 1 to 13 (MFLIYLFVQTAES). Positions 45-70 (RRRFVAEQDAIHSRVSREVPTLSDSV) are cleaved as a propeptide — removed in mature form.

Expressed in the body wall, intestine, uterus and ovary.

Its subcellular location is the secreted. In terms of biological role, has antibacterial activity against several Gram-positive and Gram-negative bacteria. Is weakly active against yeasts. Acts by a nonpore mechanism. The sequence is that of Cecropin-P1 (ASCEC-1) from Ascaris suum (Pig roundworm).